Here is a 263-residue protein sequence, read N- to C-terminus: 4-hydroxy-tetrahydrodipicolinate reductase (263 aa).

Residues 7–12 (GFKGRM), 96–98 (GTT), and 122–125 (APNF) contribute to the NAD(+) site. The Proton donor/acceptor role is filled by histidine 152. Residue histidine 153 coordinates (S)-2,3,4,5-tetrahydrodipicolinate. Lysine 156 (proton donor) is an active-site residue. Position 162-163 (162-163 (GT)) interacts with (S)-2,3,4,5-tetrahydrodipicolinate.

It belongs to the DapB family.

The protein localises to the cytoplasm. The enzyme catalyses (S)-2,3,4,5-tetrahydrodipicolinate + NAD(+) + H2O = (2S,4S)-4-hydroxy-2,3,4,5-tetrahydrodipicolinate + NADH + H(+). It catalyses the reaction (S)-2,3,4,5-tetrahydrodipicolinate + NADP(+) + H2O = (2S,4S)-4-hydroxy-2,3,4,5-tetrahydrodipicolinate + NADPH + H(+). It functions in the pathway amino-acid biosynthesis; L-lysine biosynthesis via DAP pathway; (S)-tetrahydrodipicolinate from L-aspartate: step 4/4. In terms of biological role, catalyzes the conversion of 4-hydroxy-tetrahydrodipicolinate (HTPA) to tetrahydrodipicolinate. This is 4-hydroxy-tetrahydrodipicolinate reductase from Listeria welshimeri serovar 6b (strain ATCC 35897 / DSM 20650 / CCUG 15529 / CIP 8149 / NCTC 11857 / SLCC 5334 / V8).